Reading from the N-terminus, the 394-residue chain is Mitogen-activated protein kinase 2 (394 aa).

Positions 1 to 31 (MRMEGGGGGGHGHHGGGGGGHGHHGGIGGGE) are enriched in gly residues. Residues 1–33 (MRMEGGGGGGHGHHGGGGGGHGHHGGIGGGEAQ) form a disordered region. One can recognise a Protein kinase domain in the interval 61–347 (VPPIRPVGRG…VDEALCHPYL (287 aa)). Residues 67 to 75 (VGRGACGII) and Lys-90 each bind ATP. The active-site Proton acceptor is the Asp-187. Tyr-221 is modified (phosphotyrosine).

The protein belongs to the protein kinase superfamily. CMGC Ser/Thr protein kinase family. MAP kinase subfamily. In terms of processing, the phosphorylation on Tyr-221 activates the enzyme. A conserved Thr, which must also be phosphorylated to activate the enzyme in closely related sequences, is replaced by Met-219 in this sequence.

It catalyses the reaction L-seryl-[protein] + ATP = O-phospho-L-seryl-[protein] + ADP + H(+). The catalysed reaction is L-threonyl-[protein] + ATP = O-phospho-L-threonyl-[protein] + ADP + H(+). This is Mitogen-activated protein kinase 2 (MPK2) from Oryza sativa subsp. japonica (Rice).